The primary structure comprises 232 residues: uncharacterized protein (232 aa).

Residues Ala209–Phe229 traverse the membrane as a helical segment.

It is found in the host membrane. This is an uncharacterized protein from Saccharolobus islandicus (Sulfolobus islandicus).